Here is a 24-residue protein sequence, read N- to C-terminus: DYE-linked aldehyde dehydrogenase, alpha chain (24 aa).

As to quaternary structure, heterotetramer composed of an alpha, a beta and two gamma chains. Mo-molybdopterin cytosine dinucleotide serves as cofactor.

In terms of biological role, active with aldehydes and formate esters as substrates. The sequence is that of DYE-linked aldehyde dehydrogenase, alpha chain from Amycolatopsis methanolica.